Reading from the N-terminus, the 121-residue chain is Small ribosomal subunit protein bS16 (121 aa).

The tract at residues 80–121 (AGVREKTERNNPNKAKPGKKAQERAEEKAAKAAEAAEAADAE) is disordered. Basic and acidic residues-rich tracts occupy residues 81–90 (GVREKTERNN) and 99–110 (KAQERAEEKAAK).

Belongs to the bacterial ribosomal protein bS16 family.

The sequence is that of Small ribosomal subunit protein bS16 from Ruegeria sp. (strain TM1040) (Silicibacter sp.).